A 234-amino-acid polypeptide reads, in one-letter code: Small ribosomal subunit protein uS5 (234 aa).

Positions 1 to 10 (MEDIKTTTPE) are enriched in polar residues. Residues 1-69 (MEDIKTTTPE…KDGSGNKPNK (69 aa)) form a disordered region. Residues 11 to 31 (VKNEENKTSEVKEGKALEKNN) show a composition bias toward basic and acidic residues. The S5 DRBM domain maps to 78-141 (LEEKIVGVKK…KSAKNNMYKV (64 aa)).

The protein belongs to the universal ribosomal protein uS5 family. As to quaternary structure, part of the 30S ribosomal subunit. Contacts proteins S4 and S8.

Functionally, with S4 and S12 plays an important role in translational accuracy. Its function is as follows. Located at the back of the 30S subunit body where it stabilizes the conformation of the head with respect to the body. The protein is Small ribosomal subunit protein uS5 of Malacoplasma penetrans (strain HF-2) (Mycoplasma penetrans).